The sequence spans 583 residues: Phosphoglucomutase, cytoplasmic 1 (583 aa).

Alpha-D-glucose 1,6-bisphosphate-binding residues include Arg-25 and Ser-124. Residue Ser-124 is the Phosphoserine intermediate of the active site. Ser-124, Asp-300, Asp-302, and Asp-304 together coordinate Mg(2+). The residue at position 124 (Ser-124) is a Phosphoserine. Alpha-D-glucose 1,6-bisphosphate contacts are provided by Asp-304, Arg-305, Thr-368, Glu-387, Ser-389, and Lys-400.

It belongs to the phosphohexose mutase family. As to quaternary structure, monomer. The cofactor is Mg(2+). In terms of processing, autophosphorylated. Mostly expressed in roots and coleoptiles, and, to a lower extent, in leaves, pollen and developing seeds.

The protein localises to the cytoplasm. The enzyme catalyses alpha-D-glucose 1-phosphate = alpha-D-glucose 6-phosphate. It carries out the reaction O-phospho-L-seryl-[protein] + alpha-D-glucose 1-phosphate = alpha-D-glucose 1,6-bisphosphate + L-seryl-[protein]. It catalyses the reaction alpha-D-glucose 1,6-bisphosphate + L-seryl-[protein] = O-phospho-L-seryl-[protein] + alpha-D-glucose 6-phosphate. Its function is as follows. Catalyzes the reversible isomerization of alpha-D-glucose 1-phosphate to alpha-D-glucose 6-phosphate. The mechanism proceeds via the intermediate compound alpha-D-glucose 1,6-bisphosphate. This enzyme participates in both the breakdown and synthesis of glucose. The sequence is that of Phosphoglucomutase, cytoplasmic 1 from Zea mays (Maize).